Consider the following 333-residue polypeptide: Starch-binding domain-containing protein 1 (333 aa).

The Extracellular segment spans residues 1 to 6 (MGAVWS). Residues 7 to 23 (ALLVGGGLAGALILWLL) form a helical membrane-spanning segment. The Cytoplasmic portion of the chain corresponds to 24-333 (RGDSGAPGKD…KVVHGWWGIH (310 aa)). 2 disordered regions span residues 31 to 73 (GKDG…ELVS) and 106 to 139 (NARE…RVGE). Residues 50–61 (PGGGPGGGGSGG) show a composition bias toward gly residues. A Phosphoserine modification is found at Ser67. The span at 124–134 (NSETSRNQSPE) shows a compositional bias: polar residues. A phosphoserine mark is found at Ser135 and Ser162. An LIR motif is present at residues 181–187 (HEDWEVV). A phosphoserine mark is found at Ser191, Ser192, Ser201, Ser205, Ser208, Ser216, and Ser219. The 100-residue stretch at 233-332 (SVKPRQVSIQ…DKVVHGWWGI (100 aa)) folds into the CBM20 domain.

Interacts with the ATG8 family proteins GABARAP and GABARAPL1. Interacts with several glycogen-associated proteins, such as GYS2 (liver glycogen synthase), GDE (glycogen debranching enzyme), GBE1 (glycogen branching enzyme 1) and EPM2A (Laforin). Post-translationally, ubiquitinated, which leads to proteasomal degradation.

The protein localises to the preautophagosomal structure membrane. The protein resides in the endoplasmic reticulum membrane. It is found in the cell membrane. Its subcellular location is the sarcolemma. It localises to the T-tubule. Its function is as follows. Acts as a cargo receptor for glycogen. Delivers its cargo to an autophagic pathway called glycophagy, resulting in the transport of glycogen to lysosomes. This is Starch-binding domain-containing protein 1 from Rattus norvegicus (Rat).